Reading from the N-terminus, the 96-residue chain is Protein RnfH (96 aa).

This sequence belongs to the UPF0125 (RnfH) family.

The protein is Protein RnfH of Pectobacterium carotovorum subsp. carotovorum (strain PC1).